A 255-amino-acid polypeptide reads, in one-letter code: Thiazole synthase (255 aa).

Lys-96 functions as the Schiff-base intermediate with DXP in the catalytic mechanism. Residues Gly-157, Ala-183–Gly-184, and Asn-205–Ser-206 each bind 1-deoxy-D-xylulose 5-phosphate.

Belongs to the ThiG family. In terms of assembly, homotetramer. Forms heterodimers with either ThiH or ThiS.

The protein localises to the cytoplasm. The catalysed reaction is [ThiS sulfur-carrier protein]-C-terminal-Gly-aminoethanethioate + 2-iminoacetate + 1-deoxy-D-xylulose 5-phosphate = [ThiS sulfur-carrier protein]-C-terminal Gly-Gly + 2-[(2R,5Z)-2-carboxy-4-methylthiazol-5(2H)-ylidene]ethyl phosphate + 2 H2O + H(+). The protein operates within cofactor biosynthesis; thiamine diphosphate biosynthesis. Its function is as follows. Catalyzes the rearrangement of 1-deoxy-D-xylulose 5-phosphate (DXP) to produce the thiazole phosphate moiety of thiamine. Sulfur is provided by the thiocarboxylate moiety of the carrier protein ThiS. In vitro, sulfur can be provided by H(2)S. The polypeptide is Thiazole synthase (Staphylococcus carnosus (strain TM300)).